An 820-amino-acid polypeptide reads, in one-letter code: Cation/H(+) antiporter 17 (820 aa).

12 helical membrane-spanning segments follow: residues 30–50 (LPLLILQICIVLLLTRLLAFL), 58–75 (RVIAEIVGGILLGPSALG), 90–110 (LTVLDTLANLGLIFFLFLVGL), 124–144 (ALSIALAGITLPFVLGIGTSF), 159–179 (FLVFMGVALSITAFPVLARIL), 192–212 (IALSAAAVNDVAAWILLALAV), 222–242 (LTSLWVFLSGCGFVLFCIFVV), 276–296 (FVTDFIGIHALFGAFVIGVIF), 313–333 (LVSGLFLPLYFVSSGLKTNVA), 342–362 (GLLVLVIFNACFGKIIGTVLV), 374–394 (LALGFLMNTKGLVELIVLNIG), and 404–424 (IFAIMVLMAIFTTFMTTPLVL). Phosphoserine is present on residues Ser-817 and Ser-819.

The protein belongs to the monovalent cation:proton antiporter 2 (CPA2) transporter (TC 2.A.37) family. CHX (TC 2.A.37.4) subfamily. Predominantly expressed in epidermal and cortical cells of mature roots but also barely detected in leaves.

Its subcellular location is the membrane. In terms of biological role, operates as a K(+)/H(+) antiporter that controls K(+) acquisition and homeostasis. The sequence is that of Cation/H(+) antiporter 17 (CHX17) from Arabidopsis thaliana (Mouse-ear cress).